Here is a 562-residue protein sequence, read N- to C-terminus: MSEQKLSDNERLKAESNFLRGTIELDLKNDLTGGFTGDNFQLIRLHGMYQQDDRDIRAERAQQKLEPLHNVMLRARMPGGIITPEQWLGIDKFAHDHTMYGSIRLTTRQTFQFHGVLKPNIKMMHQTLNKYGIDSIATAGDVNRNVLCTSNPVESELHQEAYEWAKKISEHLLPKTRAYAEIWLDGEKLGPDEEPILGSTYLPRKFKTTVVIPPHNDIDVHANDLNFVAIAEDGKLVGFNVLVGGGLAMTHGNKETFPRKADDFGFIRKEDTLKFAEAVVTTQRDWGNRVNRQNAKTKYTLERVGVDAFKAEVEKRTGIKFEESRPYVFTSRGDRFGWVEGIDGKQHLTLFIENGRILDFPGKPLKTGLAEIAKIHKGDFRMTANQNLIIAGVPKKDKAKIEKIARAHGLIDDAITEQRKNSMACVALPTCPLAMAEAERFLPAFTTQIEAVMAKHGLADDHVIFRVTGCPNGCGRAMLAEIGLVGKAMDRYNFYIGGNREGTRIPRQYRENITSAEILKEIDALLGRWAKERNENEGFGDFVIRAGIVKPVVDSAKDFYAA.

[4Fe-4S] cluster-binding residues include cysteine 425, cysteine 431, cysteine 470, and cysteine 474. Cysteine 474 is a binding site for siroheme.

The protein belongs to the nitrite and sulfite reductase 4Fe-4S domain family. In terms of assembly, alpha(8)-beta(8). The alpha component is a flavoprotein, the beta component is a hemoprotein. Siroheme serves as cofactor. The cofactor is [4Fe-4S] cluster.

It carries out the reaction hydrogen sulfide + 3 NADP(+) + 3 H2O = sulfite + 3 NADPH + 4 H(+). Its pathway is sulfur metabolism; hydrogen sulfide biosynthesis; hydrogen sulfide from sulfite (NADPH route): step 1/1. Functionally, component of the sulfite reductase complex that catalyzes the 6-electron reduction of sulfite to sulfide. This is one of several activities required for the biosynthesis of L-cysteine from sulfate. The protein is Sulfite reductase [NADPH] hemoprotein beta-component of Tolumonas auensis (strain DSM 9187 / NBRC 110442 / TA 4).